The sequence spans 484 residues: Ribosomal protein uS12 methylthiotransferase RimO (484 aa).

Residues 8–119 form the MTTase N-terminal domain; it reads RRVAMVTLGC…LAERLDDVLA (112 aa). Positions 17, 53, 82, 184, 188, and 191 each coordinate [4Fe-4S] cluster. The 232-residue stretch at 170 to 401 folds into the Radical SAM core domain; that stretch reads LDDSPLAALK…ALADELVAQR (232 aa). Residues 403-469 form the TRAM domain; that stretch reads EDRVGTEVRV…GVDLVVRPVG (67 aa).

Belongs to the methylthiotransferase family. RimO subfamily. [4Fe-4S] cluster is required as a cofactor.

The protein localises to the cytoplasm. It carries out the reaction L-aspartate(89)-[ribosomal protein uS12]-hydrogen + (sulfur carrier)-SH + AH2 + 2 S-adenosyl-L-methionine = 3-methylsulfanyl-L-aspartate(89)-[ribosomal protein uS12]-hydrogen + (sulfur carrier)-H + 5'-deoxyadenosine + L-methionine + A + S-adenosyl-L-homocysteine + 2 H(+). Catalyzes the methylthiolation of an aspartic acid residue of ribosomal protein uS12. The protein is Ribosomal protein uS12 methylthiotransferase RimO of Saccharopolyspora erythraea (strain ATCC 11635 / DSM 40517 / JCM 4748 / NBRC 13426 / NCIMB 8594 / NRRL 2338).